We begin with the raw amino-acid sequence, 324 residues long: HPr kinase/phosphorylase (324 aa).

Catalysis depends on residues His-146 and Lys-167. Position 161-168 (161-168 (GDSGLGKS)) interacts with ATP. Ser-168 is a binding site for Mg(2+). The active-site Proton acceptor; for phosphorylation activity. Proton donor; for dephosphorylation activity is Asp-185. Positions 209–218 (LEVRGLGLLD) are important for the catalytic mechanism of both phosphorylation and dephosphorylation. Glu-210 is a binding site for Mg(2+). Residue Arg-250 is part of the active site. Residues 271–276 (QVAAGR) form an important for the catalytic mechanism of dephosphorylation region.

This sequence belongs to the HPrK/P family. As to quaternary structure, homohexamer. It depends on Mg(2+) as a cofactor.

It carries out the reaction [HPr protein]-L-serine + ATP = [HPr protein]-O-phospho-L-serine + ADP + H(+). The catalysed reaction is [HPr protein]-O-phospho-L-serine + phosphate + H(+) = [HPr protein]-L-serine + diphosphate. In terms of biological role, catalyzes the ATP- as well as the pyrophosphate-dependent phosphorylation of a specific serine residue in HPr, a phosphocarrier protein of the phosphoenolpyruvate-dependent sugar phosphotransferase system (PTS). HprK/P also catalyzes the pyrophosphate-producing, inorganic phosphate-dependent dephosphorylation (phosphorolysis) of seryl-phosphorylated HPr (P-Ser-HPr). The protein is HPr kinase/phosphorylase of Ralstonia nicotianae (strain ATCC BAA-1114 / GMI1000) (Ralstonia solanacearum).